Here is a 111-residue protein sequence, read N- to C-terminus: Elevenin (111 aa).

Positions 1–24 are cleaved as a signal peptide; the sequence is MAPSQKALLVLVLSMLLTASDSRA. Cys29 and Cys38 form a disulfide bridge. The propeptide occupies 44–111; it reads KRGGDSLSVG…TEQLDRLLTL (68 aa).

The protein belongs to the elevenin family. In terms of assembly, monomer. As to expression, expressed by the venom duct.

It localises to the secreted. Functionally, may mimic the function of prey elevenin neuropeptide. In vivo, intracranial injection in mice induces hyperactivity. This is Elevenin from Conus ebraeus (Hebrew cone).